Here is a 149-residue protein sequence, read N- to C-terminus: Protein SprT-like (149 aa).

The region spanning 6 to 147 (LQKLTEDISL…CGKCRGKIKR (142 aa)) is the SprT-like domain. A Zn(2+)-binding site is contributed by His-67. Glu-68 is an active-site residue. His-71 is a Zn(2+) binding site.

It belongs to the SprT family. Zn(2+) serves as cofactor.

The protein localises to the cytoplasm. The chain is Protein SprT-like from Bacillus velezensis (strain DSM 23117 / BGSC 10A6 / LMG 26770 / FZB42) (Bacillus amyloliquefaciens subsp. plantarum).